The primary structure comprises 286 residues: Phosphatidylserine decarboxylase proenzyme (286 aa).

Active-site charge relay system; for autoendoproteolytic cleavage activity residues include Asp-91, His-148, and Ser-251. Ser-251 (schiff-base intermediate with substrate; via pyruvic acid; for decarboxylase activity) is an active-site residue. The residue at position 251 (Ser-251) is a Pyruvic acid (Ser); by autocatalysis.

It belongs to the phosphatidylserine decarboxylase family. PSD-B subfamily. Prokaryotic type I sub-subfamily. Heterodimer of a large membrane-associated beta subunit and a small pyruvoyl-containing alpha subunit. Pyruvate is required as a cofactor. Is synthesized initially as an inactive proenzyme. Formation of the active enzyme involves a self-maturation process in which the active site pyruvoyl group is generated from an internal serine residue via an autocatalytic post-translational modification. Two non-identical subunits are generated from the proenzyme in this reaction, and the pyruvate is formed at the N-terminus of the alpha chain, which is derived from the carboxyl end of the proenzyme. The autoendoproteolytic cleavage occurs by a canonical serine protease mechanism, in which the side chain hydroxyl group of the serine supplies its oxygen atom to form the C-terminus of the beta chain, while the remainder of the serine residue undergoes an oxidative deamination to produce ammonia and the pyruvoyl prosthetic group on the alpha chain. During this reaction, the Ser that is part of the protease active site of the proenzyme becomes the pyruvoyl prosthetic group, which constitutes an essential element of the active site of the mature decarboxylase.

It localises to the cell membrane. The enzyme catalyses a 1,2-diacyl-sn-glycero-3-phospho-L-serine + H(+) = a 1,2-diacyl-sn-glycero-3-phosphoethanolamine + CO2. It functions in the pathway phospholipid metabolism; phosphatidylethanolamine biosynthesis; phosphatidylethanolamine from CDP-diacylglycerol: step 2/2. Catalyzes the formation of phosphatidylethanolamine (PtdEtn) from phosphatidylserine (PtdSer). This chain is Phosphatidylserine decarboxylase proenzyme, found in Marinobacter nauticus (strain ATCC 700491 / DSM 11845 / VT8) (Marinobacter aquaeolei).